A 942-amino-acid polypeptide reads, in one-letter code: Diacylglycerol kinase theta (942 aa).

Residues 1–59 (MAAAAEPGARAWLGGGSPRPGSPACSPVLGSGGRARPGPGPGPGPERAGVRAPGPAAAP) are disordered. Ser22 and Ser26 each carry phosphoserine. A compositionally biased stretch (low complexity) spans 45–59 (PERAGVRAPGPAAAP). 3 consecutive Phorbol-ester/DAG-type zinc fingers follow at residues 60–108 (GHSF…RIPC), 121–168 (AHCF…CSDC), and 183–234 (HHHW…APEC). Positions 269–295 (EPGEGGDGADGSAAVGPGRETQATPES) are disordered. Positions 395 to 494 (AQEVLKIYPG…TRFYVAESRD (100 aa)) constitute a Ras-associating domain. 2 short sequence motifs (LXXLL motif) span residues 555–559 (LYMLL) and 574–578 (LPDLL). The region spanning 584–721 (PDSCPLLVFV…MDRWTILLDA (138 aa)) is the DAGKc domain. A disordered region spans residues 908–942 (PKVHMLRKAKQKPRRAGTTRDARADAAPAPESDPR). The span at 911-924 (HMLRKAKQKPRRAG) shows a compositional bias: basic residues. The span at 932 to 942 (DAAPAPESDPR) shows a compositional bias: low complexity.

This sequence belongs to the eukaryotic diacylglycerol kinase family. As to quaternary structure, interacts with RHOA (constitutively activated, GTP-bound); the interaction inhibits DGKQ. Interacts with PRKCE. Interacts with PRKCH. Interacts with PLCB1. Interacts with NR5A1; the interaction requires both LXXLL motifs in DGKQ and is required for full phosphatidic acid-mediated activation of NR5A1. Phosphorylated by PRKCE and PRKCH in vitro.

Its subcellular location is the cytoplasm. The protein resides in the cytosol. It is found in the cell membrane. It localises to the synapse. The protein localises to the cytoskeleton. Its subcellular location is the nucleus. The protein resides in the nucleus speckle. It is found in the nucleus matrix. It carries out the reaction a 1,2-diacyl-sn-glycerol + ATP = a 1,2-diacyl-sn-glycero-3-phosphate + ADP + H(+). The enzyme catalyses a 1-O-alkyl-sn-glycerol + ATP = a 1-O-alkyl-sn-glycero-3-phosphate + ADP + H(+). It catalyses the reaction 1-O-alkyl-2-acyl-sn-glycerol + ATP = 1-O-alkyl-2-acyl-sn-glycero-3-phosphate + ADP + H(+). The catalysed reaction is 1,2-di-(9Z-octadecenoyl)-sn-glycerol + ATP = 1,2-di-(9Z-octadecenoyl)-sn-glycero-3-phosphate + ADP + H(+). It carries out the reaction 1-O-hexadecyl-sn-glycerol + ATP = 1-O-hexadecyl-sn-glycero-3-phosphate + ADP + H(+). The enzyme catalyses 1-O-hexadecyl-2-acetyl-sn-glycerol + ATP = 1-O-hexadecyl-2-acetyl-sn-glycero-3-phosphate + ADP + H(+). It catalyses the reaction 1-octadecanoyl-2-(5Z,8Z,11Z,14Z-eicosatetraenoyl)-sn-glycerol + ATP = 1-octadecanoyl-2-(5Z,8Z,11Z,14Z-eicosatetraenoyl)-sn-glycero-3-phosphate + ADP + H(+). The protein operates within lipid metabolism; glycerolipid metabolism. With respect to regulation, activated by phosphatidylserine. Diacylglycerol kinase that converts diacylglycerol/DAG into phosphatidic acid/phosphatidate/PA and regulates the respective levels of these two bioactive lipids. Thereby, acts as a central switch between the signaling pathways activated by these second messengers with different cellular targets and opposite effects in numerous biological processes. Within the adrenocorticotropic hormone signaling pathway, produces phosphatidic acid which in turn activates NR5A1 and subsequent steroidogenic gene transcription. Also functions downstream of the nerve growth factor signaling pathway being specifically activated in the nucleus by the growth factor. Through its diacylglycerol activity also regulates synaptic vesicle endocytosis. The sequence is that of Diacylglycerol kinase theta from Homo sapiens (Human).